A 210-amino-acid chain; its full sequence is MARSSHTSKSSASWLKEHFDDRYVQRSWQDGYRSRASYKLLELDAKDALLKPGMTVIDLGAAPGGWSQIAADKVGDKGCVIASDILEMDALAGVTFVQGDFTEMEVLEQILVALEGRRVDLVMSDMAPNMSGMAAIDQPQAMYLVELALDLARQTLSPGGRFLAKVFQGEGFDAYLKELRGSFRKVVTRKPEASRARSREVYLLAEGFHG.

S-adenosyl-L-methionine contacts are provided by Gly64, Trp66, Asp84, Asp100, and Asp125. Lys165 acts as the Proton acceptor in catalysis.

The protein belongs to the class I-like SAM-binding methyltransferase superfamily. RNA methyltransferase RlmE family.

It is found in the cytoplasm. The enzyme catalyses uridine(2552) in 23S rRNA + S-adenosyl-L-methionine = 2'-O-methyluridine(2552) in 23S rRNA + S-adenosyl-L-homocysteine + H(+). Specifically methylates the uridine in position 2552 of 23S rRNA at the 2'-O position of the ribose in the fully assembled 50S ribosomal subunit. The polypeptide is Ribosomal RNA large subunit methyltransferase E (Chromohalobacter salexigens (strain ATCC BAA-138 / DSM 3043 / CIP 106854 / NCIMB 13768 / 1H11)).